We begin with the raw amino-acid sequence, 308 residues long: Glutaminase 2 (308 aa).

Ser-66, Asn-117, Glu-161, Asn-168, Tyr-192, Tyr-244, and Val-262 together coordinate substrate.

Belongs to the glutaminase family. Homotetramer.

It carries out the reaction L-glutamine + H2O = L-glutamate + NH4(+). This chain is Glutaminase 2, found in Escherichia coli O157:H7.